Here is a 590-residue protein sequence, read N- to C-terminus: Beta-fructofuranosidase, cell wall isozyme (590 aa).

The first 28 residues, 1–28, serve as a signal peptide directing secretion; the sequence is MGTRPRGVVLAPWAVVLVLVLALRLAGA. Asp68 is a catalytic residue. Residues Asn190 and Asn341 are each glycosylated (N-linked (GlcNAc...) asparagine).

This sequence belongs to the glycosyl hydrolase 32 family.

It is found in the secreted. Its subcellular location is the cell wall. The catalysed reaction is Hydrolysis of terminal non-reducing beta-D-fructofuranoside residues in beta-D-fructofuranosides.. This Zea mays (Maize) protein is Beta-fructofuranosidase, cell wall isozyme.